A 179-amino-acid chain; its full sequence is Adenylyl-sulfate kinase (179 aa).

13–20 (GLSGAGKS) contributes to the ATP binding site. The Phosphoserine intermediate role is filled by Ser87.

The protein belongs to the APS kinase family.

It carries out the reaction adenosine 5'-phosphosulfate + ATP = 3'-phosphoadenylyl sulfate + ADP + H(+). Its pathway is sulfur metabolism; hydrogen sulfide biosynthesis; sulfite from sulfate: step 2/3. Its function is as follows. Catalyzes the synthesis of activated sulfate. This is Adenylyl-sulfate kinase from Paraburkholderia xenovorans (strain LB400).